Here is a 248-residue protein sequence, read N- to C-terminus: NH(3)-dependent NAD(+) synthetase (248 aa).

ATP is bound at residue 31 to 38 (GVSGGVDS). Mg(2+) is bound at residue D37. A deamido-NAD(+)-binding site is contributed by R114. T134 lines the ATP pocket. E139 contacts Mg(2+). Positions 147 and 154 each coordinate deamido-NAD(+). ATP is bound by residues K163 and S185. 236 to 237 (HK) lines the deamido-NAD(+) pocket.

The protein belongs to the NAD synthetase family. As to quaternary structure, homodimer.

The catalysed reaction is deamido-NAD(+) + NH4(+) + ATP = AMP + diphosphate + NAD(+) + H(+). The protein operates within cofactor biosynthesis; NAD(+) biosynthesis; NAD(+) from deamido-NAD(+) (ammonia route): step 1/1. Catalyzes the ATP-dependent amidation of deamido-NAD to form NAD. Uses ammonia as a nitrogen source. The sequence is that of NH(3)-dependent NAD(+) synthetase from Methanoregula boonei (strain DSM 21154 / JCM 14090 / 6A8).